Consider the following 247-residue polypeptide: tRNA pseudouridine synthase A 1 (247 aa).

The Nucleophile role is filled by D53. A substrate-binding site is contributed by Y111.

Belongs to the tRNA pseudouridine synthase TruA family. As to quaternary structure, homodimer.

The enzyme catalyses uridine(38/39/40) in tRNA = pseudouridine(38/39/40) in tRNA. Formation of pseudouridine at positions 38, 39 and 40 in the anticodon stem and loop of transfer RNAs. The protein is tRNA pseudouridine synthase A 1 of Bacillus cereus (strain ZK / E33L).